The chain runs to 531 residues: Probable rhamnogalacturonate lyase A (531 aa).

The first 20 residues, 1 to 20 (MLSKALFFSSLPLWAKVASA), serve as a signal peptide directing secretion. Disulfide bonds link Cys50-Cys93 and Cys184-Cys193. A glycan (N-linked (GlcNAc...) asparagine) is linked at Asn351.

Belongs to the polysaccharide lyase 4 family.

Its subcellular location is the secreted. It carries out the reaction Endotype eliminative cleavage of L-alpha-rhamnopyranosyl-(1-&gt;4)-alpha-D-galactopyranosyluronic acid bonds of rhamnogalacturonan I domains in ramified hairy regions of pectin leaving L-rhamnopyranose at the reducing end and 4-deoxy-4,5-unsaturated D-galactopyranosyluronic acid at the non-reducing end.. Pectinolytic enzymes consist of four classes of enzymes: pectin lyase, polygalacturonase, pectin methylesterase and rhamnogalacturonase. Degrades the rhamnogalacturonan I (RG-I) backbone of pectin. This is Probable rhamnogalacturonate lyase A (rglA) from Aspergillus terreus (strain NIH 2624 / FGSC A1156).